A 496-amino-acid polypeptide reads, in one-letter code: Probable cytosol aminopeptidase (496 aa).

Lys-261 and Asp-266 together coordinate Mn(2+). Lys-273 is a catalytic residue. 3 residues coordinate Mn(2+): Asp-284, Asp-343, and Glu-345. Arg-347 is a catalytic residue.

Belongs to the peptidase M17 family. It depends on Mn(2+) as a cofactor.

The protein resides in the cytoplasm. The enzyme catalyses Release of an N-terminal amino acid, Xaa-|-Yaa-, in which Xaa is preferably Leu, but may be other amino acids including Pro although not Arg or Lys, and Yaa may be Pro. Amino acid amides and methyl esters are also readily hydrolyzed, but rates on arylamides are exceedingly low.. The catalysed reaction is Release of an N-terminal amino acid, preferentially leucine, but not glutamic or aspartic acids.. In terms of biological role, presumably involved in the processing and regular turnover of intracellular proteins. Catalyzes the removal of unsubstituted N-terminal amino acids from various peptides. This is Probable cytosol aminopeptidase from Bacillus licheniformis (strain ATCC 14580 / DSM 13 / JCM 2505 / CCUG 7422 / NBRC 12200 / NCIMB 9375 / NCTC 10341 / NRRL NRS-1264 / Gibson 46).